The sequence spans 123 residues: Omega-oxotoxin-Ot1a (123 aa).

A signal peptide spans 1 to 16; that stretch reads MKIVLVFVCTLYLAQA. The propeptide occupies 17–54; sequence TYLSEQDVNEVSEFLEALDQANEAASEMVEAAETEEAR. The Oxytoxin-type inhibitor cystine knot (ICK) domain occupies 55 to 122; sequence DWECLPLHSS…GKINTCDKYK (68 aa). Intrachain disulfides connect Cys58–Cys72, Cys65–Cys77, Cys69–Cys118, Cys71–Cys106, and Cys79–Cys104.

The protein belongs to the spiderine family. Spiderine subfamily. In terms of processing, mass spectrometry data suggest a carboxylated free C-terminal residue. In terms of tissue distribution, expressed by the venom gland.

The protein localises to the secreted. In terms of biological role, weak blocker of vertebrate P/Q-, N- and L-type voltage-gated calcium channels (Cav1 and Cav2). Is both paralytic and lethal when injected into lepidopteran larvae. Is not toxic to mice. The protein is Omega-oxotoxin-Ot1a of Oxyopes takobius (Lynx spider).